Here is an 809-residue protein sequence, read N- to C-terminus: uncharacterized protein (809 aa).

Positions 19–206 (HDLRLVLVAS…FTGMSAITIV (188 aa)) constitute an MHYT domain. 7 consecutive transmembrane segments (helical) span residues 23–43 (LVLV…RLYS), 57–77 (LLLT…IAMV), 92–112 (TLLS…VASA), 122–142 (GGVL…SAFV), 152–172 (ATVG…LLLA), 186–206 (GMLC…ITIV), and 224–244 (TLAV…AVAI). Residues 254–317 (ERIRRLANAA…ADPSREDVRR (64 aa)) enclose the PAS domain. Positions 402–536 (ESLAVICIDL…GRGVYRFFKR (135 aa)) constitute a GGDEF domain. One can recognise an EAL domain in the interval 545-795 (RRNLARDLRQ…ALTMWTTAGD (251 aa)).

Its subcellular location is the cell membrane. This is an uncharacterized protein from Caulobacter vibrioides (strain ATCC 19089 / CIP 103742 / CB 15) (Caulobacter crescentus).